Here is a 110-residue protein sequence, read N- to C-terminus: METQAKLRFSRVSPQKARLVADQIRGLPVDDALRTLEYSPRKAAEIVRKVLESAVANAEHNDGADVDELRVARIFVDEGPTMKRIQPRAKGRANRILKRTSHITVAVAED.

This sequence belongs to the universal ribosomal protein uL22 family. In terms of assembly, part of the 50S ribosomal subunit.

In terms of biological role, this protein binds specifically to 23S rRNA; its binding is stimulated by other ribosomal proteins, e.g. L4, L17, and L20. It is important during the early stages of 50S assembly. It makes multiple contacts with different domains of the 23S rRNA in the assembled 50S subunit and ribosome. The globular domain of the protein is located near the polypeptide exit tunnel on the outside of the subunit, while an extended beta-hairpin is found that lines the wall of the exit tunnel in the center of the 70S ribosome. This is Large ribosomal subunit protein uL22 from Halorhodospira halophila (strain DSM 244 / SL1) (Ectothiorhodospira halophila (strain DSM 244 / SL1)).